Reading from the N-terminus, the 212-residue chain is MLAILDYKAGNQTSVRRALDHLGIPCVITADPAVIAGAHGVIFPGVGAAGQAMNELLTTGLDKVLKDQVQAGKPLLGICVGCQIMLDYSQENDTKALGIVPGECRLFNAAWTEEDGTPIRVPHMGWNSIVQKRPCELLKGIEPEAEFYFVHSYYPAPPESYVIATCTYGEEFCAIHGGPGLWAVQFHPEKSGRPGLALLRNFYAYCKEASRA.

A Glutamine amidotransferase type-1 domain is found at 1–212 (MLAILDYKAG…YAYCKEASRA (212 aa)). Cys-79 serves as the catalytic Nucleophile. Active-site residues include His-187 and Glu-189.

Heterodimer of HisH and HisF.

Its subcellular location is the cytoplasm. It carries out the reaction 5-[(5-phospho-1-deoxy-D-ribulos-1-ylimino)methylamino]-1-(5-phospho-beta-D-ribosyl)imidazole-4-carboxamide + L-glutamine = D-erythro-1-(imidazol-4-yl)glycerol 3-phosphate + 5-amino-1-(5-phospho-beta-D-ribosyl)imidazole-4-carboxamide + L-glutamate + H(+). The enzyme catalyses L-glutamine + H2O = L-glutamate + NH4(+). Its pathway is amino-acid biosynthesis; L-histidine biosynthesis; L-histidine from 5-phospho-alpha-D-ribose 1-diphosphate: step 5/9. Its function is as follows. IGPS catalyzes the conversion of PRFAR and glutamine to IGP, AICAR and glutamate. The HisH subunit catalyzes the hydrolysis of glutamine to glutamate and ammonia as part of the synthesis of IGP and AICAR. The resulting ammonia molecule is channeled to the active site of HisF. This is Imidazole glycerol phosphate synthase subunit HisH from Nitratidesulfovibrio vulgaris (strain DSM 19637 / Miyazaki F) (Desulfovibrio vulgaris).